The following is a 188-amino-acid chain: ATP synthase subunit b 1 (188 aa).

Residues 35–55 (VHFGSHLFWLAISFGLFYLFI) traverse the membrane as a helical segment.

The protein belongs to the ATPase B chain family. F-type ATPases have 2 components, F(1) - the catalytic core - and F(0) - the membrane proton channel. F(1) has five subunits: alpha(3), beta(3), gamma(1), delta(1), epsilon(1). F(0) has three main subunits: a(1), b(2) and c(10-14). The alpha and beta chains form an alternating ring which encloses part of the gamma chain. F(1) is attached to F(0) by a central stalk formed by the gamma and epsilon chains, while a peripheral stalk is formed by the delta and b chains.

Its subcellular location is the cell inner membrane. Its function is as follows. F(1)F(0) ATP synthase produces ATP from ADP in the presence of a proton or sodium gradient. F-type ATPases consist of two structural domains, F(1) containing the extramembraneous catalytic core and F(0) containing the membrane proton channel, linked together by a central stalk and a peripheral stalk. During catalysis, ATP synthesis in the catalytic domain of F(1) is coupled via a rotary mechanism of the central stalk subunits to proton translocation. Component of the F(0) channel, it forms part of the peripheral stalk, linking F(1) to F(0). This chain is ATP synthase subunit b 1, found in Bartonella henselae (strain ATCC 49882 / DSM 28221 / CCUG 30454 / Houston 1) (Rochalimaea henselae).